The chain runs to 273 residues: Mitochondrial distribution and morphology protein 12 (273 aa).

The SMP-LTD domain maps to 1–273 (MSIDFDWSKL…LVWPSYITIE (273 aa)). The disordered stretch occupies residues 124 to 145 (LTSPIPESRPSTPMDNHQERDR).

This sequence belongs to the MDM12 family. In terms of assembly, component of the ER-mitochondria encounter structure (ERMES) or MDM complex, composed of mmm1, mdm10, mdm12 and mdm34. A mmm1 homodimer associates with one molecule of mdm12 on each side in a pairwise head-to-tail manner, and the SMP-LTD domains of mmm1 and mdm12 generate a continuous hydrophobic tunnel for phospholipid trafficking.

The protein localises to the mitochondrion outer membrane. It localises to the endoplasmic reticulum membrane. In terms of biological role, component of the ERMES/MDM complex, which serves as a molecular tether to connect the endoplasmic reticulum (ER) and mitochondria. Components of this complex are involved in the control of mitochondrial shape and protein biogenesis, and function in nonvesicular lipid trafficking between the ER and mitochondria. Mdm12 is required for the interaction of the ER-resident membrane protein mmm1 and the outer mitochondrial membrane-resident beta-barrel protein mdm10. The mdm12-mmm1 subcomplex functions in the major beta-barrel assembly pathway that is responsible for biogenesis of all mitochondrial outer membrane beta-barrel proteins, and acts in a late step after the SAM complex. The mdm10-mdm12-mmm1 subcomplex further acts in the TOM40-specific pathway after the action of the mdm12-mmm1 complex. Essential for establishing and maintaining the structure of mitochondria and maintenance of mtDNA nucleoids. In Schizosaccharomyces pombe (strain 972 / ATCC 24843) (Fission yeast), this protein is Mitochondrial distribution and morphology protein 12.